Here is a 133-residue protein sequence, read N- to C-terminus: Glycophorin-A (133 aa).

Residues threonine 1 and threonine 6 are each glycosylated (O-linked (GalNAc...) threonine). The tract at residues 1–34 (TETPVTGEQGSATPGNVSNATVTAGKPSATSPGV) is disordered. The Extracellular portion of the chain corresponds to 1–62 (TETPVTGEQG…SYHQDFSHAE (62 aa)). The O-linked (GalNAc...) serine glycan is linked to serine 11. O-linked (GalNAc...) threonine glycosylation is present at threonine 13. The N-linked (GlcNAc...) asparagine glycan is linked to asparagine 19. O-linked (GalNAc...) threonine glycosylation is found at threonine 21, threonine 23, and threonine 30. O-linked (GalNAc...) serine glycosylation occurs at serine 31. N-linked (GlcNAc...) asparagine glycosylation is present at asparagine 39. Residues threonine 41 and threonine 48 are each glycosylated (O-linked (GalNAc...) threonine). A helical membrane pass occupies residues 63–85 (ITGIIFAVMAGLLLIIFLIAYLI). The Cytoplasmic portion of the chain corresponds to 86 to 133 (RRMIKKPLPVPKPQDSPDIGTENTADPSELQDTEDPPLTSVEIETPAS). The segment at 93 to 133 (LPVPKPQDSPDIGTENTADPSELQDTEDPPLTSVEIETPAS) is disordered.

It belongs to the glycophorin-A family. Homodimer. Component of the ankyrin-1 complex in the erythrocyte, composed of ANK1, RHCE, RHAG, SLC4A1, EPB42, GYPA, GYPB and AQP1. Interacts with SLC4A1; a GYPA monomer is bound at each end of the SLC4A1 dimer forming a heterotetramer.

Its subcellular location is the membrane. Its function is as follows. Component of the ankyrin-1 complex, a multiprotein complex involved in the stability and shape of the erythrocyte membrane. Glycophorin A is the major intrinsic membrane protein of the erythrocyte. The N-terminal glycosylated segment, which lies outside the erythrocyte membrane, has MN blood group receptors. Appears to be important for the function of SLC4A1 and is required for high activity of SLC4A1. May be involved in translocation of SLC4A1 to the plasma membrane. The sequence is that of Glycophorin-A from Sus scrofa (Pig).